A 596-amino-acid chain; its full sequence is Aspartic proteinase MKC7 (596 aa).

An N-terminal signal peptide occupies residues 1-22 (MKLSVLTFVVDALLVCSSIVDA). Positions 23–65 (GVTDFPSLPSNEVYVKMNFQKKYGSSFENALDDTKGRTRLMTR) are excised as a propeptide. Positions 81-468 (YSVELDIGTP…DLDNMEISMA (388 aa)) constitute a Peptidase A1 domain. The active site involves D99. N180, N190, N219, N229, N232, N286, and N346 each carry an N-linked (GlcNAc...) asparagine glycan. Residue D360 is part of the active site. Residues N471 and N517 are each glycosylated (N-linked (GlcNAc...) asparagine). The segment covering 530-570 (ATSSSSSKGQKTQTSTTALSISKSTSSTSSTGMLSPTSSSS) has biased composition (low complexity). The disordered stretch occupies residues 530 to 578 (ATSSSSSKGQKTQTSTTALSISKSTSSTSSTGMLSPTSSSSTRKENGGH). A lipid anchor (GPI-anchor amidated asparagine) is attached at N575. A propeptide spans 576–596 (GGHNLNPPFFARFITAIFHHI) (removed in mature form).

It belongs to the peptidase A1 family.

Its subcellular location is the cell membrane. It carries out the reaction Hydrolyzes various precursor proteins with Arg or Lys in P1, and commonly Arg or Lys also in P2. The P3 amino acid is usually non-polar, but otherwise additional basic amino acids are favorable in both non-prime and prime positions.. Cleaves proteins C-terminally to the most C-terminal basic residue. Can process the alpha-mating factor precursor. Required for cell wall integrity. This is Aspartic proteinase MKC7 (MKC7) from Saccharomyces cerevisiae (strain ATCC 204508 / S288c) (Baker's yeast).